A 190-amino-acid polypeptide reads, in one-letter code: Orotate phosphoribosyltransferase (190 aa).

Glu114–Ser122 contacts 5-phospho-alpha-D-ribose 1-diphosphate. Positions 118 and 146 each coordinate orotate.

The protein belongs to the purine/pyrimidine phosphoribosyltransferase family. PyrE subfamily. In terms of assembly, homodimer. The cofactor is Mg(2+).

It carries out the reaction orotidine 5'-phosphate + diphosphate = orotate + 5-phospho-alpha-D-ribose 1-diphosphate. It functions in the pathway pyrimidine metabolism; UMP biosynthesis via de novo pathway; UMP from orotate: step 1/2. Functionally, catalyzes the transfer of a ribosyl phosphate group from 5-phosphoribose 1-diphosphate to orotate, leading to the formation of orotidine monophosphate (OMP). This is Orotate phosphoribosyltransferase from Caldanaerobacter subterraneus subsp. tengcongensis (strain DSM 15242 / JCM 11007 / NBRC 100824 / MB4) (Thermoanaerobacter tengcongensis).